Consider the following 127-residue polypeptide: Major sperm protein isoform beta (127 aa).

A2 carries the post-translational modification N-acetylalanine. The MSP domain maps to 9 to 126 (DINTQPGSKI…RRKNLPIEYN (118 aa)).

In terms of assembly, forms filaments 10 nm wide, with a characteristic substructure repeating axially at 9 nm. Sperm.

The protein localises to the cell projection. It localises to the pseudopodium. Its subcellular location is the cytoplasm. It is found in the cytoskeleton. Functionally, central component in molecular interactions underlying sperm crawling. Forms an extensive filament system that extends from sperm villipoda, along the leading edge of the pseudopod. The chain is Major sperm protein isoform beta from Ascaris suum (Pig roundworm).